The chain runs to 92 residues: Large ribosomal subunit protein bL27 (92 aa).

The propeptide occupies 1–10 (MLLQLQIQLF).

It belongs to the bacterial ribosomal protein bL27 family. The N-terminus is cleaved by ribosomal processing cysteine protease Prp.

The protein is Large ribosomal subunit protein bL27 of Aster yellows witches'-broom phytoplasma (strain AYWB).